The primary structure comprises 419 residues: UDP-N-acetylglucosamine 1-carboxyvinyltransferase (419 aa).

22–23 (KN) lines the phosphoenolpyruvate pocket. Arg93 contacts UDP-N-acetyl-alpha-D-glucosamine. The active-site Proton donor is the Cys117. Cys117 is subject to 2-(S-cysteinyl)pyruvic acid O-phosphothioketal. Residues Asp307 and Ile329 each coordinate UDP-N-acetyl-alpha-D-glucosamine.

The protein belongs to the EPSP synthase family. MurA subfamily.

It is found in the cytoplasm. It catalyses the reaction phosphoenolpyruvate + UDP-N-acetyl-alpha-D-glucosamine = UDP-N-acetyl-3-O-(1-carboxyvinyl)-alpha-D-glucosamine + phosphate. Its pathway is cell wall biogenesis; peptidoglycan biosynthesis. Its function is as follows. Cell wall formation. Adds enolpyruvyl to UDP-N-acetylglucosamine. This chain is UDP-N-acetylglucosamine 1-carboxyvinyltransferase, found in Shewanella denitrificans (strain OS217 / ATCC BAA-1090 / DSM 15013).